Consider the following 355-residue polypeptide: Probable GTP 3',8-cyclase (355 aa).

The 229-residue stretch at 5-233 folds into the Radical SAM core domain; the sequence is AYGRPLKDLR…GRLHNRRVYR (229 aa). Arginine 14 provides a ligand contact to GTP. [4Fe-4S] cluster is bound by residues cysteine 21, cysteine 25, and cysteine 28. Residue lysine 69 participates in GTP binding. Residue glycine 73 coordinates S-adenosyl-L-methionine. Position 97 (threonine 97) interacts with GTP. Serine 121 is a binding site for S-adenosyl-L-methionine. Residue lysine 157 coordinates GTP. Residues cysteine 252 and cysteine 255 each contribute to the [4Fe-4S] cluster site. 257 to 259 is a binding site for GTP; that stretch reads RVR. Cysteine 269 is a binding site for [4Fe-4S] cluster.

Belongs to the radical SAM superfamily. MoaA family. [4Fe-4S] cluster serves as cofactor.

The enzyme catalyses GTP + AH2 + S-adenosyl-L-methionine = (8S)-3',8-cyclo-7,8-dihydroguanosine 5'-triphosphate + 5'-deoxyadenosine + L-methionine + A + H(+). It participates in cofactor biosynthesis; molybdopterin biosynthesis. In terms of biological role, catalyzes the cyclization of GTP to (8S)-3',8-cyclo-7,8-dihydroguanosine 5'-triphosphate. The protein is Probable GTP 3',8-cyclase of Aeropyrum pernix (strain ATCC 700893 / DSM 11879 / JCM 9820 / NBRC 100138 / K1).